We begin with the raw amino-acid sequence, 257 residues long: Phosphate import ATP-binding protein PstB (257 aa).

The region spanning leucine 4 to lysine 246 is the ABC transporter domain. Residue glycine 36 to serine 43 coordinates ATP.

This sequence belongs to the ABC transporter superfamily. Phosphate importer (TC 3.A.1.7) family. As to quaternary structure, the complex is composed of two ATP-binding proteins (PstB), two transmembrane proteins (PstC and PstA) and a solute-binding protein (PstS).

The protein localises to the cell membrane. The catalysed reaction is phosphate(out) + ATP + H2O = ADP + 2 phosphate(in) + H(+). Part of the ABC transporter complex PstSACB involved in phosphate import. Responsible for energy coupling to the transport system. This chain is Phosphate import ATP-binding protein PstB, found in Corynebacterium glutamicum (strain ATCC 13032 / DSM 20300 / JCM 1318 / BCRC 11384 / CCUG 27702 / LMG 3730 / NBRC 12168 / NCIMB 10025 / NRRL B-2784 / 534).